Reading from the N-terminus, the 517-residue chain is Bifunctional purine biosynthesis protein PurH (517 aa).

An MGS-like domain is found at 1-145 (MSPLALVSVS…KNHKDVSVLV (145 aa)).

Belongs to the PurH family.

It carries out the reaction (6R)-10-formyltetrahydrofolate + 5-amino-1-(5-phospho-beta-D-ribosyl)imidazole-4-carboxamide = 5-formamido-1-(5-phospho-D-ribosyl)imidazole-4-carboxamide + (6S)-5,6,7,8-tetrahydrofolate. The catalysed reaction is IMP + H2O = 5-formamido-1-(5-phospho-D-ribosyl)imidazole-4-carboxamide. It functions in the pathway purine metabolism; IMP biosynthesis via de novo pathway; 5-formamido-1-(5-phospho-D-ribosyl)imidazole-4-carboxamide from 5-amino-1-(5-phospho-D-ribosyl)imidazole-4-carboxamide (10-formyl THF route): step 1/1. The protein operates within purine metabolism; IMP biosynthesis via de novo pathway; IMP from 5-formamido-1-(5-phospho-D-ribosyl)imidazole-4-carboxamide: step 1/1. The protein is Bifunctional purine biosynthesis protein PurH of Prochlorococcus marinus (strain MIT 9312).